A 2238-amino-acid polypeptide reads, in one-letter code: Protein Ycf2 (2238 aa).

Residue 1579–1586 (GSIGTGRS) participates in ATP binding.

Belongs to the Ycf2 family.

The protein localises to the plastid. Its function is as follows. Probable ATPase of unknown function. Its presence in a non-photosynthetic plant (Epifagus virginiana) and experiments in tobacco indicate that it has an essential function which is probably not related to photosynthesis. This is Protein Ycf2 from Cuscuta exaltata (Tall dodder).